Here is a 1171-residue protein sequence, read N- to C-terminus: ATP-dependent helicase/deoxyribonuclease subunit B (1171 aa).

The UvrD-like helicase ATP-binding domain maps to 1–301 (MSLRFVIGRA…AHLEMHYEAR (301 aa)). 8-15 (GRAGSGKS) contacts ATP. In terms of domain architecture, UvrD-like helicase C-terminal spans 281–587 (MKQPRFHSQA…QFANIPPSLD (307 aa)). 4 residues coordinate [4Fe-4S] cluster: Cys-805, Cys-1129, Cys-1132, and Cys-1138.

This sequence belongs to the helicase family. AddB/RexB type 1 subfamily. Heterodimer of AddA and AddB. It depends on Mg(2+) as a cofactor. [4Fe-4S] cluster is required as a cofactor.

The heterodimer acts as both an ATP-dependent DNA helicase and an ATP-dependent, dual-direction single-stranded exonuclease. Recognizes the chi site generating a DNA molecule suitable for the initiation of homologous recombination. The AddB subunit has 5' -&gt; 3' nuclease activity but not helicase activity. The polypeptide is ATP-dependent helicase/deoxyribonuclease subunit B (Bacillus mycoides (strain KBAB4) (Bacillus weihenstephanensis)).